The chain runs to 662 residues: Glutathione hydrolase 7 (662 aa).

Over 1 to 106 (MAAENEASQE…AAECSCRQDG (106 aa)) the chain is Cytoplasmic. A phosphoserine mark is found at S17, S72, S79, and S83. The interval 26-90 (SFPRLPEDEP…DGSPLRETRK (65 aa)) is disordered. The segment covering 72–83 (SSSSEMGSQDGS) has biased composition (low complexity). A helical; Signal-anchor for type II membrane protein transmembrane segment spans residues 107–127 (LTVIVTACLTFATGVTVALVM). The Extracellular segment spans residues 128–662 (QIYFGDPQIF…SPDAAGATIL (535 aa)). N-linked (GlcNAc...) asparagine glycosylation is found at N198, N267, N283, N330, N353, N394, N452, N519, N523, and N586.

The protein belongs to the gamma-glutamyltransferase family. Interacts with TLCD3A. In terms of assembly, heterodimer composed of the light and heavy chains. The active site is located in the light chain. Cleaved by autocatalysis into a large and a small subunit and the autocatalytic cleavage is essential to the functional activation of the enzyme. Widely expressed, but at low level, except in the airway epithelial cells. Detected in brain, heart, kidney, liver, lung, spleen, testis and trachea.

The protein resides in the membrane. It catalyses the reaction an N-terminal (5-L-glutamyl)-[peptide] + an alpha-amino acid = 5-L-glutamyl amino acid + an N-terminal L-alpha-aminoacyl-[peptide]. The catalysed reaction is glutathione + H2O = L-cysteinylglycine + L-glutamate. It carries out the reaction an S-substituted glutathione + H2O = an S-substituted L-cysteinylglycine + L-glutamate. Its pathway is sulfur metabolism; glutathione metabolism. Hydrolyzes and transfers gamma-glutamyl moieties from glutathione and other gamma-glutamyl compounds to acceptors. This is Glutathione hydrolase 7 from Homo sapiens (Human).